The sequence spans 321 residues: NADPH-dependent codeinone reductase 1-4 (321 aa).

Residues Thr-27 and Asp-51 each contribute to the NADPH site. Active-site proton donor residues include Tyr-56 and His-119. Residue His-119 coordinates substrate. Ser-165, Gln-187, Ser-214, Leu-216, Ser-264, and Arg-269 together coordinate NADPH. The segment at 299–321 is disordered; it reads SADFLLSPTGPFKTEEEFWDEKD.

The protein belongs to the aldo/keto reductase family. As to expression, latex secreting cells (laticifer cells). Expressed constitutively in all organs with highest levels in capsules. Restricted to the parietal region of sieve elements adjacent or proximal to laticifers in roots, stems, leaves and carpels.

It localises to the cytoplasm. The protein resides in the cytosol. It catalyses the reaction codeine + NADP(+) = codeinone + NADPH + H(+). The catalysed reaction is neopine + NADP(+) = neopinone + NADPH + H(+). The enzyme catalyses morphine + NADP(+) = morphinone + NADPH + H(+). It carries out the reaction neomorphine + NADP(+) = neomorphinone + NADPH + H(+). The protein operates within alkaloid biosynthesis; morphine biosynthesis. Functionally, NADPH-dependent codeinone reductase involved in biosynthesis of morphinan-type benzylisoquinoline and opiate alkaloids natural products. Reduces codeinone to codeine in the penultimate step in morphine biosynthesis. Can use morphinone, hydrocodone and hydromorphone as substrate during reductive reaction with NADPH as cofactor, and morphine and dihydrocodeine as substrate during oxidative reaction with NADP as cofactor. Converts morphinone to morphine, and neomorphinone to neomorphine. Reduces irreversibly neopinone, a spontaneous isomer of codeinone, to neopine; in planta, neopine levels are limited to low levels. This is NADPH-dependent codeinone reductase 1-4 from Papaver somniferum (Opium poppy).